The sequence spans 125 residues: Class III hydrophobin G (125 aa).

The first 20 residues, 1–20 (MKPSIVTFLMLAAVTAAVSA), serve as a signal peptide directing secretion. Disulfide bonds link C54/C107, C60/C101, C61/C94, and C108/C122.

This sequence belongs to the fungal hydrophobin family. In terms of assembly, self-assembles to form functional amyloid fibrils called rodlets. Self-assembly into fibrillar rodlets occurs spontaneously at hydrophobic:hydrophilic interfaces and the rodlets further associate laterally to form amphipathic monolayers.

The protein resides in the secreted. It localises to the cell wall. Functionally, aerial growth, conidiation, and dispersal of filamentous fungi in the environment rely upon a capability of their secreting small amphipathic proteins called hydrophobins (HPBs) with low sequence identity. Class I can self-assemble into an outermost layer of rodlet bundles on aerial cell surfaces, conferring cellular hydrophobicity that supports fungal growth, development and dispersal; whereas Class II form highly ordered films at water-air interfaces through intermolecular interactions but contribute nothing to the rodlet structure. RodF and rodG belong to Class III, which contains hydrophobins with intermediate (between classes I and II) or atypical characteristics. RodG, unlike rodA, is not required for rodlet formation. The sequence is that of Class III hydrophobin G from Aspergillus fumigatus (strain ATCC MYA-4609 / CBS 101355 / FGSC A1100 / Af293) (Neosartorya fumigata).